We begin with the raw amino-acid sequence, 186 residues long: CASP-like protein ARALYDRAFT_316979 (186 aa).

At 1 to 23 the chain is on the cytoplasmic side; it reads MRRNGDGEEVVAKRRRRIKELVQ. The chain crosses the membrane as a helical span at residues 24–44; the sequence is VALRGGCLAASATAMAVMLTA. Residues 45–70 lie on the Extracellular side of the membrane; it reads TEEGVADIYGFKLTLSSNWSFSPSYQ. The N-linked (GlcNAc...) asparagine glycan is linked to asparagine 62. The chain crosses the membrane as a helical span at residues 71-91; that stretch reads YVVGACTGTVLYSLFQLCLGV. Residues 92 to 115 are Cytoplasmic-facing; that stretch reads YRLLTGSPITPSRFQAWLCFTSDQ. Residues 116 to 132 form a helical membrane-spanning segment; it reads LFGYLMMSAGSAGSGVT. Residues 133-161 lie on the Extracellular side of the membrane; it reads NLNKTGIRHTPLPDFCKTLSSFCNHVALS. The N-linked (GlcNAc...) asparagine glycan is linked to asparagine 135. Residues 162-182 traverse the membrane as a helical segment; that stretch reads LLLVFLSFIFLASSSFFTVLV. Topologically, residues 183–186 are cytoplasmic; the sequence is LSTP.

This sequence belongs to the Casparian strip membrane proteins (CASP) family. In terms of assembly, homodimer and heterodimers.

Its subcellular location is the cell membrane. This is CASP-like protein ARALYDRAFT_316979 from Arabidopsis lyrata subsp. lyrata (Lyre-leaved rock-cress).